A 179-amino-acid polypeptide reads, in one-letter code: Transcription factor 21 (179 aa).

Residues D19 to E88 form a disordered region. 2 stretches are compositionally biased toward polar residues: residues E30–P49 and S70–Q80. Positions V79–L131 constitute a bHLH domain.

Efficient DNA binding requires dimerization with another bHLH protein. Forms a heterodimer with TCF3 and binds the E box (5'-CANNTG-3'). In terms of tissue distribution, expressed at high levels in lung, kidney, gut, heart, ovary and podocytes (visceral glomerular epithelial cells). Also found in spleen, large intestine, uterus, bladder and testis.

It localises to the nucleus. Involved in epithelial-mesenchymal interactions in kidney and lung morphogenesis that include epithelial differentiation and branching morphogenesis. May be involved in the organogenesis of the spleen and heart and in cardiac and coronary artery development. May function in the development and sex differentiation of gonad via transcriptional regulation of AD4BP/SF-1. The polypeptide is Transcription factor 21 (Tcf21) (Mus musculus (Mouse)).